The primary structure comprises 436 residues: 3-ketoacyl-CoA thiolase (436 aa).

Residue cysteine 99 is the Acyl-thioester intermediate of the active site. Catalysis depends on proton acceptor residues histidine 392 and cysteine 422.

It belongs to the thiolase-like superfamily. Thiolase family. In terms of assembly, heterotetramer of two alpha chains (FadJ) and two beta chains (FadI).

It localises to the cytoplasm. It catalyses the reaction an acyl-CoA + acetyl-CoA = a 3-oxoacyl-CoA + CoA. It participates in lipid metabolism; fatty acid beta-oxidation. Its function is as follows. Catalyzes the final step of fatty acid oxidation in which acetyl-CoA is released and the CoA ester of a fatty acid two carbons shorter is formed. The polypeptide is 3-ketoacyl-CoA thiolase (Yersinia pseudotuberculosis serotype O:1b (strain IP 31758)).